The following is a 333-amino-acid chain: tRNA uridine(34) hydroxylase (333 aa).

One can recognise a Rhodanese domain in the interval 123-217 (SDPEVVLVDT…YLEEVNKAES (95 aa)). The active-site Cysteine persulfide intermediate is the Cys177. Residues 313 to 327 (QKKEALRKQSAEKNK) show a composition bias toward basic and acidic residues. A disordered region spans residues 313 to 333 (QKKEALRKQSAEKNKAKQANA).

The protein belongs to the TrhO family.

It carries out the reaction uridine(34) in tRNA + AH2 + O2 = 5-hydroxyuridine(34) in tRNA + A + H2O. Functionally, catalyzes oxygen-dependent 5-hydroxyuridine (ho5U) modification at position 34 in tRNAs. In Shewanella oneidensis (strain ATCC 700550 / JCM 31522 / CIP 106686 / LMG 19005 / NCIMB 14063 / MR-1), this protein is tRNA uridine(34) hydroxylase.